Reading from the N-terminus, the 300-residue chain is Phosphatidylserine decarboxylase proenzyme (300 aa).

Residues aspartate 117, histidine 173, and serine 260 each act as charge relay system; for autoendoproteolytic cleavage activity in the active site. The active-site Schiff-base intermediate with substrate; via pyruvic acid; for decarboxylase activity is the serine 260. Serine 260 is subject to Pyruvic acid (Ser); by autocatalysis.

Belongs to the phosphatidylserine decarboxylase family. PSD-B subfamily. Prokaryotic type II sub-subfamily. In terms of assembly, heterodimer of a large membrane-associated beta subunit and a small pyruvoyl-containing alpha subunit. Pyruvate is required as a cofactor. Is synthesized initially as an inactive proenzyme. Formation of the active enzyme involves a self-maturation process in which the active site pyruvoyl group is generated from an internal serine residue via an autocatalytic post-translational modification. Two non-identical subunits are generated from the proenzyme in this reaction, and the pyruvate is formed at the N-terminus of the alpha chain, which is derived from the carboxyl end of the proenzyme. The autoendoproteolytic cleavage occurs by a canonical serine protease mechanism, in which the side chain hydroxyl group of the serine supplies its oxygen atom to form the C-terminus of the beta chain, while the remainder of the serine residue undergoes an oxidative deamination to produce ammonia and the pyruvoyl prosthetic group on the alpha chain. During this reaction, the Ser that is part of the protease active site of the proenzyme becomes the pyruvoyl prosthetic group, which constitutes an essential element of the active site of the mature decarboxylase.

The protein resides in the cell membrane. The enzyme catalyses a 1,2-diacyl-sn-glycero-3-phospho-L-serine + H(+) = a 1,2-diacyl-sn-glycero-3-phosphoethanolamine + CO2. It functions in the pathway phospholipid metabolism; phosphatidylethanolamine biosynthesis; phosphatidylethanolamine from CDP-diacylglycerol: step 2/2. Functionally, catalyzes the formation of phosphatidylethanolamine (PtdEtn) from phosphatidylserine (PtdSer). The protein is Phosphatidylserine decarboxylase proenzyme of Fusobacterium nucleatum subsp. nucleatum (strain ATCC 25586 / DSM 15643 / BCRC 10681 / CIP 101130 / JCM 8532 / KCTC 2640 / LMG 13131 / VPI 4355).